The sequence spans 472 residues: WAS protein family homolog DDB_G0292878 (472 aa).

The interval 279–472 (LPTYDNSNSG…ESDTDSSEWE (194 aa)) is disordered. The span at 282 to 299 (YDNSNSGSAPVNQSSGGD) shows a compositional bias: polar residues. Residues 300-314 (NNVNNNNNNNNSNNS) are compositionally biased toward low complexity. Over residues 320 to 356 (PPQPTNAPPPPPPPPQSANAPPPPPPPPVSAPPPFNP) the composition is skewed to pro residues. Residues 363–373 (NDDDDDDDDDN) are compositionally biased toward acidic residues. Residues 374 to 383 (GGGGGPGGAI) are compositionally biased toward gly residues. Positions 382 to 401 (AIGDLLADIRRGHKNRLKKA) constitute a WH2 domain. Residues 457–472 (TDDQDGESDTDSSEWE) show a composition bias toward acidic residues.

Belongs to the WASH1 family.

Its function is as follows. Acts as a nucleation-promoting factor by activating the Arp2/3 complex to induce actin polymerization. This chain is WAS protein family homolog DDB_G0292878, found in Dictyostelium discoideum (Social amoeba).